The sequence spans 473 residues: MATATEQWVLVEMVQALYEAPAYHLILEGILILWIIRLLFSKTYKLQERSDLTVKEKEELIEEWQPEPLVPPVPKDHPALNYNIVSGPPSHKIVVNGKECINFASFNFLGLLDNPRVKAAALASLKKYGVGTCGPRGFYGTFDVHLDLEDRLAKFMKTEEAIIYSYGFATIASAIPAYSKRGDIVFVDRAACFAIQKGLQASRSDIKLFKHNDMADLERLLKEQEIEDQKNPRKARVTRRFIVVEGLYMNTGTICPLPELVKLKYKYKARIFLEESLSFGVLGEHGRGVTEHYGINIDDIDLISANMENALASIGGFCCGRSFVIDHQRLSGQGYCFSASLPPLLAAAAIEALNIMEENPGIFAVLKEKCRQIHKALQGISGLKVVGESLSPAFHLQLEESTGSREQDVRLLQEIVDQCMDRSIALTQARYLEKEEKCLPPPSIRVVVTVEQTAEELERAASTIKEVAQAVLL.

The Lumenal segment spans residues 1 to 15 (MATATEQWVLVEMVQ). Positions 1 to 66 (MATATEQWVL…KEELIEEWQP (66 aa)) are interaction with SPTLC2. A helical transmembrane segment spans residues 16–36 (ALYEAPAYHLILEGILILWII). At 37–473 (RLLFSKTYKL…IKEVAQAVLL (437 aa)) the chain is on the cytoplasmic side. The residue at position 164 (Tyr164) is a Phosphotyrosine; by ABL.

It belongs to the class-II pyridoxal-phosphate-dependent aminotransferase family. In terms of assembly, component of the serine palmitoyltransferase (SPT) complex, which is also composed of SPTLC2 or SPTLC3 and SPTSSA or SPTSSB. The heterodimer with SPTLC2 or SPTLC3 forms the catalytic core of the enzyme, while SPTSSA or SPTSSB subunits determine substrate specificity. SPT also interacts with ORMDL proteins, especially ORMDL3, which negatively regulate SPT activity in the presence of ceramides. Forms dimers of heterodimers with SPTLC2. Interacts with RTN4. It depends on pyridoxal 5'-phosphate as a cofactor. Post-translationally, phosphorylation at Tyr-164 inhibits activity and promotes cell survival.

The protein localises to the endoplasmic reticulum membrane. It carries out the reaction L-serine + hexadecanoyl-CoA + H(+) = 3-oxosphinganine + CO2 + CoA. It catalyses the reaction octadecanoyl-CoA + L-serine + H(+) = 3-oxoeicosasphinganine + CO2 + CoA. The enzyme catalyses tetradecanoyl-CoA + L-serine + H(+) = 3-oxohexadecasphinganine + CO2 + CoA. The catalysed reaction is dodecanoyl-CoA + L-serine + H(+) = 3-oxotetradecasphinganine + CO2 + CoA. It participates in lipid metabolism; sphingolipid metabolism. Its activity is regulated as follows. SPT complex catalytic activity is negatively regulated by ORMDL proteins, including ORMDL3, in the presence of ceramides. This mechanism allows to maintain ceramide levels at sufficient concentrations for the production of complex sphingolipids, but which prevents the accumulation of ceramides to levels that trigger apoptosis. In terms of biological role, component of the serine palmitoyltransferase multisubunit enzyme (SPT) that catalyzes the initial and rate-limiting step in sphingolipid biosynthesis by condensing L-serine and activated acyl-CoA (most commonly palmitoyl-CoA) to form long-chain bases. The SPT complex is also composed of SPTLC2 or SPTLC3 and SPTSSA or SPTSSB. Within this complex, the heterodimer with SPTLC2 or SPTLC3 forms the catalytic core. The composition of the serine palmitoyltransferase (SPT) complex determines the substrate preference. The SPTLC1-SPTLC2-SPTSSA complex shows a strong preference for C16-CoA substrate, while the SPTLC1-SPTLC3-SPTSSA isozyme uses both C14-CoA and C16-CoA as substrates, with a slight preference for C14-CoA. The SPTLC1-SPTLC2-SPTSSB complex shows a strong preference for C18-CoA substrate, while the SPTLC1-SPTLC3-SPTSSB isozyme displays an ability to use a broader range of acyl-CoAs, without apparent preference. Required for adipocyte cell viability and metabolic homeostasis. The polypeptide is Serine palmitoyltransferase 1 (SPTLC1) (Macaca fascicularis (Crab-eating macaque)).